We begin with the raw amino-acid sequence, 471 residues long: Glutamate--tRNA ligase (471 aa).

The short motif at 9–19 (PSPTGYLHVGG) is the 'HIGH' region element. Zn(2+)-binding residues include C98, C100, C125, and H127. Residues 237–241 (KLSKR) carry the 'KMSKS' region motif. An ATP-binding site is contributed by K240.

It belongs to the class-I aminoacyl-tRNA synthetase family. Glutamate--tRNA ligase type 1 subfamily. Monomer. Zn(2+) serves as cofactor.

Its subcellular location is the cytoplasm. It carries out the reaction tRNA(Glu) + L-glutamate + ATP = L-glutamyl-tRNA(Glu) + AMP + diphosphate. Functionally, catalyzes the attachment of glutamate to tRNA(Glu) in a two-step reaction: glutamate is first activated by ATP to form Glu-AMP and then transferred to the acceptor end of tRNA(Glu). This chain is Glutamate--tRNA ligase, found in Escherichia coli O157:H7.